A 103-amino-acid polypeptide reads, in one-letter code: Large ribosomal subunit protein bL21 (103 aa).

The protein belongs to the bacterial ribosomal protein bL21 family. In terms of assembly, part of the 50S ribosomal subunit. Contacts protein L20.

In terms of biological role, this protein binds to 23S rRNA in the presence of protein L20. The sequence is that of Large ribosomal subunit protein bL21 from Beijerinckia indica subsp. indica (strain ATCC 9039 / DSM 1715 / NCIMB 8712).